The chain runs to 183 residues: Peptide deformylase (183 aa).

Cys110 and His153 together coordinate Fe cation. Glu154 is a catalytic residue. Residue His157 participates in Fe cation binding.

This sequence belongs to the polypeptide deformylase family. Fe(2+) serves as cofactor.

The catalysed reaction is N-terminal N-formyl-L-methionyl-[peptide] + H2O = N-terminal L-methionyl-[peptide] + formate. Its function is as follows. Removes the formyl group from the N-terminal Met of newly synthesized proteins. Requires at least a dipeptide for an efficient rate of reaction. N-terminal L-methionine is a prerequisite for activity but the enzyme has broad specificity at other positions. The protein is Peptide deformylase of Listeria welshimeri serovar 6b (strain ATCC 35897 / DSM 20650 / CCUG 15529 / CIP 8149 / NCTC 11857 / SLCC 5334 / V8).